A 204-amino-acid chain; its full sequence is ATP phosphoribosyltransferase (204 aa).

Belongs to the ATP phosphoribosyltransferase family. Short subfamily. Heteromultimer composed of HisG and HisZ subunits.

The protein resides in the cytoplasm. The enzyme catalyses 1-(5-phospho-beta-D-ribosyl)-ATP + diphosphate = 5-phospho-alpha-D-ribose 1-diphosphate + ATP. It participates in amino-acid biosynthesis; L-histidine biosynthesis; L-histidine from 5-phospho-alpha-D-ribose 1-diphosphate: step 1/9. Its function is as follows. Catalyzes the condensation of ATP and 5-phosphoribose 1-diphosphate to form N'-(5'-phosphoribosyl)-ATP (PR-ATP). Has a crucial role in the pathway because the rate of histidine biosynthesis seems to be controlled primarily by regulation of HisG enzymatic activity. The chain is ATP phosphoribosyltransferase from Leptospira biflexa serovar Patoc (strain Patoc 1 / Ames).